A 123-amino-acid chain; its full sequence is Fluoride-specific ion channel FluC (123 aa).

Transmembrane regions (helical) follow at residues 7-27 (VAIA…SGIL), 39-59 (LVNS…FWGI), 68-88 (FFGT…YETF), and 100-120 (ALNI…GFIL). Residues glycine 75 and serine 78 each contribute to the Na(+) site.

This sequence belongs to the fluoride channel Fluc/FEX (TC 1.A.43) family.

It is found in the cell membrane. The enzyme catalyses fluoride(in) = fluoride(out). Its activity is regulated as follows. Na(+) is not transported, but it plays an essential structural role and its presence is essential for fluoride channel function. In terms of biological role, fluoride-specific ion channel. Important for reducing fluoride concentration in the cell, thus reducing its toxicity. The sequence is that of Fluoride-specific ion channel FluC from Thermococcus onnurineus (strain NA1).